Consider the following 545-residue polypeptide: Chaperonin GroEL 3 (545 aa).

Residues 29–32 (TLGP), 86–90 (DGTTT), G413, 479–481 (DAV), and D495 contribute to the ATP site. The disordered stretch occupies residues 526–545 (DKQAKAPAGVGPGPGEGFDY). Gly residues predominate over residues 535–545 (VGPGPGEGFDY).

The protein belongs to the chaperonin (HSP60) family. As to quaternary structure, forms a cylinder of 14 subunits composed of two heptameric rings stacked back-to-back. Interacts with the co-chaperonin GroES.

The protein resides in the cytoplasm. The enzyme catalyses ATP + H2O + a folded polypeptide = ADP + phosphate + an unfolded polypeptide.. Functionally, together with its co-chaperonin GroES, plays an essential role in assisting protein folding. The GroEL-GroES system forms a nano-cage that allows encapsulation of the non-native substrate proteins and provides a physical environment optimized to promote and accelerate protein folding. The chain is Chaperonin GroEL 3 from Trichormus variabilis (strain ATCC 29413 / PCC 7937) (Anabaena variabilis).